Reading from the N-terminus, the 214-residue chain is Dephospho-CoA kinase (214 aa).

One can recognise a DPCK domain in the interval 20-214 (RIGITGGIAS…KLQLKKLYKF (195 aa)). 28 to 33 (ASGKTI) contacts ATP.

Belongs to the CoaE family.

It localises to the cytoplasm. It catalyses the reaction 3'-dephospho-CoA + ATP = ADP + CoA + H(+). It participates in cofactor biosynthesis; coenzyme A biosynthesis; CoA from (R)-pantothenate: step 5/5. In terms of biological role, catalyzes the phosphorylation of the 3'-hydroxyl group of dephosphocoenzyme A to form coenzyme A. This is Dephospho-CoA kinase from Prochlorococcus marinus (strain NATL2A).